Reading from the N-terminus, the 93-residue chain is Small ribosomal subunit protein uS19 (93 aa).

The segment at 73–93 is disordered; that stretch reads EFSPTRTFRGHVKDDRKSKRR. The span at 83–93 shows a compositional bias: basic and acidic residues; it reads HVKDDRKSKRR.

It belongs to the universal ribosomal protein uS19 family.

In terms of biological role, protein S19 forms a complex with S13 that binds strongly to the 16S ribosomal RNA. In Streptomyces avermitilis (strain ATCC 31267 / DSM 46492 / JCM 5070 / NBRC 14893 / NCIMB 12804 / NRRL 8165 / MA-4680), this protein is Small ribosomal subunit protein uS19.